The following is a 257-amino-acid chain: Undecaprenyl-diphosphatase (257 aa).

8 helical membrane-spanning segments follow: residues 4-24 (LIRV…PISS), 41-61 (SVTL…VVFW), 74-94 (VIGL…TIKT), 103-123 (PLLA…LGRL), 133-153 (LGLG…LPGI), 173-193 (SVTF…VLAI), 209-229 (VLSI…KWLI), and 236-256 (RLHW…LLNL).

It belongs to the UppP family.

It is found in the cell inner membrane. It carries out the reaction di-trans,octa-cis-undecaprenyl diphosphate + H2O = di-trans,octa-cis-undecaprenyl phosphate + phosphate + H(+). Functionally, catalyzes the dephosphorylation of undecaprenyl diphosphate (UPP). Confers resistance to bacitracin. This Rhodopirellula baltica (strain DSM 10527 / NCIMB 13988 / SH1) protein is Undecaprenyl-diphosphatase.